The chain runs to 214 residues: Small ribosomal subunit protein uS3c (214 aa).

The region spanning 39–111 (IRTYIHTISK…QLTINVLEVE (73 aa)) is the KH type-2 domain.

This sequence belongs to the universal ribosomal protein uS3 family. Part of the 30S ribosomal subunit.

It is found in the plastid. It localises to the chloroplast. The protein is Small ribosomal subunit protein uS3c (rps3) of Phaeodactylum tricornutum (strain CCAP 1055/1).